Consider the following 388-residue polypeptide: Chorismate synthase (388 aa).

Residues arginine 39 and arginine 45 each contribute to the NADP(+) site. FMN-binding positions include 132-134 (RSS), 251-252 (NA), glycine 296, 311-315 (KPIPT), and arginine 337.

This sequence belongs to the chorismate synthase family. Homotetramer. Requires FMNH2 as cofactor.

The catalysed reaction is 5-O-(1-carboxyvinyl)-3-phosphoshikimate = chorismate + phosphate. It participates in metabolic intermediate biosynthesis; chorismate biosynthesis; chorismate from D-erythrose 4-phosphate and phosphoenolpyruvate: step 7/7. Functionally, catalyzes the anti-1,4-elimination of the C-3 phosphate and the C-6 proR hydrogen from 5-enolpyruvylshikimate-3-phosphate (EPSP) to yield chorismate, which is the branch point compound that serves as the starting substrate for the three terminal pathways of aromatic amino acid biosynthesis. This reaction introduces a second double bond into the aromatic ring system. This chain is Chorismate synthase, found in Staphylococcus haemolyticus (strain JCSC1435).